The sequence spans 347 residues: tRNA N6-adenosine threonylcarbamoyltransferase (347 aa).

2 residues coordinate Fe cation: H111 and H115. Substrate is bound by residues 134-138, D167, G180, and N276; that span reads LVSGG. D304 contributes to the Fe cation binding site.

The protein belongs to the KAE1 / TsaD family. Fe(2+) is required as a cofactor.

The protein resides in the cytoplasm. The catalysed reaction is L-threonylcarbamoyladenylate + adenosine(37) in tRNA = N(6)-L-threonylcarbamoyladenosine(37) in tRNA + AMP + H(+). Functionally, required for the formation of a threonylcarbamoyl group on adenosine at position 37 (t(6)A37) in tRNAs that read codons beginning with adenine. Is involved in the transfer of the threonylcarbamoyl moiety of threonylcarbamoyl-AMP (TC-AMP) to the N6 group of A37, together with TsaE and TsaB. TsaD likely plays a direct catalytic role in this reaction. The polypeptide is tRNA N6-adenosine threonylcarbamoyltransferase (Nitrosospira multiformis (strain ATCC 25196 / NCIMB 11849 / C 71)).